We begin with the raw amino-acid sequence, 298 residues long: tRNA pseudouridine synthase B (298 aa).

The active-site Nucleophile is the Asp39.

This sequence belongs to the pseudouridine synthase TruB family. Type 1 subfamily.

The enzyme catalyses uridine(55) in tRNA = pseudouridine(55) in tRNA. Its function is as follows. Responsible for synthesis of pseudouridine from uracil-55 in the psi GC loop of transfer RNAs. This Lactobacillus delbrueckii subsp. bulgaricus (strain ATCC BAA-365 / Lb-18) protein is tRNA pseudouridine synthase B.